A 470-amino-acid chain; its full sequence is Putative multidrug resistance protein MdtD (470 aa).

Over 1 to 11 (MTELPDNTRWQ) the chain is Periplasmic. The helical transmembrane segment at 12–32 (LWIVAFGFFMQSLDTTIVNTA) threads the bilayer. Residues 33–48 (LPSMAKSLGESPLHMH) lie on the Cytoplasmic side of the membrane. A helical transmembrane segment spans residues 49–69 (MVVVSYVLTVAVMLPASGWLA). Topologically, residues 70–76 (DKIGVRN) are periplasmic. A helical membrane pass occupies residues 77 to 97 (IFFAAIVLFTLGSLFCALSGT). Residues 98–101 (LNQL) lie on the Cytoplasmic side of the membrane. The helical transmembrane segment at 102 to 124 (VLARVLQGVGGAMMVPVGRLTVM) threads the bilayer. The Periplasmic portion of the chain corresponds to 125–137 (KIVPRAQYMAAMT). The chain crosses the membrane as a helical span at residues 138-158 (FVTLPGQIGPLLGPALGGVLV). At 159 to 164 (EYASWH) the chain is on the cytoplasmic side. Residues 165–185 (WIFLINIPVGIVGAMATFMLM) traverse the membrane as a helical segment. Topologically, residues 186–196 (PNYTIETRRFD) are periplasmic. The chain crosses the membrane as a helical span at residues 197–217 (LPGFLLLAIGMAVLTLALDGS). At 218-224 (KSMGISP) the chain is on the cytoplasmic side. Residues 225 to 245 (WTLAGLAAGGAAAILLYLFHA) traverse the membrane as a helical segment. The Periplasmic portion of the chain corresponds to 246–262 (KKSSGALFSLRLFRTPT). Residues 263-283 (FSLGLLGSFAGRIGSGMLPFM) form a helical membrane-spanning segment. Over 284–285 (TP) the chain is Cytoplasmic. A helical transmembrane segment spans residues 286 to 306 (VFLQIGLGFSPFHAGLMMIPM). Residues 307–341 (VLGSMGMKRIVVQIVNRFGYRRVLVATTLGLALVS) lie on the Periplasmic side of the membrane. The chain crosses the membrane as a helical span at residues 342–362 (LLFMSVALLGWYYLLPLVLLL). The Cytoplasmic portion of the chain corresponds to 363 to 395 (QGMVNSARFSSMNTLTLKDLPDTLASSGNSLLS). Residues 396 to 416 (MIMQLSMSIGVTIAGMLLGMF) form a helical membrane-spanning segment. Topologically, residues 417–430 (GQQHIGIDSSATHH) are periplasmic. Residues 431–451 (VFMYTWLCMAVIIALPAIIFA) traverse the membrane as a helical segment. The Cytoplasmic segment spans residues 452 to 470 (RVPNDTQQNMVISRRKRSL).

It belongs to the major facilitator superfamily. TCR/Tet family.

It is found in the cell inner membrane. The protein is Putative multidrug resistance protein MdtD of Salmonella paratyphi A (strain ATCC 9150 / SARB42).